The sequence spans 628 residues: Methionine--tRNA ligase (628 aa).

Positions 9-19 match the 'HIGH' region motif; it reads YYVNDVPHLGH. Zn(2+) is bound by residues cysteine 124, cysteine 127, cysteine 142, and cysteine 145. The short motif at 294-298 is the 'KMSKS' region element; it reads KMSKS. Lysine 297 contributes to the ATP binding site. Positions 527-628 constitute a tRNA-binding domain; it reads DFAKIEIKVA…QLVQNGSLVG (102 aa).

The protein belongs to the class-I aminoacyl-tRNA synthetase family. MetG type 2A subfamily. Homodimer. The cofactor is Zn(2+).

The protein localises to the cytoplasm. It carries out the reaction tRNA(Met) + L-methionine + ATP = L-methionyl-tRNA(Met) + AMP + diphosphate. Functionally, is required not only for elongation of protein synthesis but also for the initiation of all mRNA translation through initiator tRNA(fMet) aminoacylation. The chain is Methionine--tRNA ligase (metG) from Campylobacter jejuni subsp. jejuni serotype O:2 (strain ATCC 700819 / NCTC 11168).